The following is a 223-amino-acid chain: Na(+)-translocating NADH-quinone reductase subunit D (223 aa).

Helical transmembrane passes span 42-62, 66-86, 103-123, 131-151, and 178-198; these read TVMAIALTLVTGFSNLFISMI, IPSSIRMIVQMVIIASLVIVV, VFVGLIITNCIVMGRAEAFAM, FFDGIGNGLGYSAMLLVLGFI, and NGLLLLPPSAFFLIGLIIWAL.

This sequence belongs to the NqrDE/RnfAE family. Composed of six subunits; NqrA, NqrB, NqrC, NqrD, NqrE and NqrF.

The protein localises to the cell inner membrane. It catalyses the reaction a ubiquinone + n Na(+)(in) + NADH + H(+) = a ubiquinol + n Na(+)(out) + NAD(+). Its function is as follows. NQR complex catalyzes the reduction of ubiquinone-1 to ubiquinol by two successive reactions, coupled with the transport of Na(+) ions from the cytoplasm to the periplasm. NqrA to NqrE are probably involved in the second step, the conversion of ubisemiquinone to ubiquinol. This Pseudomonas paraeruginosa (strain DSM 24068 / PA7) (Pseudomonas aeruginosa (strain PA7)) protein is Na(+)-translocating NADH-quinone reductase subunit D.